The following is a 264-amino-acid chain: Tritrans,polycis-undecaprenyl-diphosphate synthase (geranylgeranyl-diphosphate specific) (264 aa).

Asp43 is a catalytic residue. Position 43 (Asp43) interacts with Mg(2+). Residues Gly44–Arg47, Trp48, His60, and Ser88–Glu90 contribute to the substrate site. Asn91 serves as the catalytic Proton acceptor. Residues Phe92, Arg94, Arg213, and Arg219–Ser221 contribute to the substrate site. Glu232 serves as a coordination point for Mg(2+).

The protein belongs to the UPP synthase family. As to quaternary structure, homodimer. The cofactor is Mg(2+).

The enzyme catalyses geranylgeranyl diphosphate + 7 isopentenyl diphosphate = tri-trans,hepta-cis-undecaprenyl diphosphate + 7 diphosphate. In terms of biological role, catalyzes the sequential condensation of isopentenyl diphosphate (IPP) with geranylgeranyl diphosphate (GGPP) to yield (2Z,6Z,10Z,14Z,18Z,22Z,26Z,30E,34E,38E)-undecaprenyl diphosphate (tritrans,heptacis-UPP). It is probably the precursor of glycosyl carrier lipids. This is Tritrans,polycis-undecaprenyl-diphosphate synthase (geranylgeranyl-diphosphate specific) from Pyrococcus furiosus (strain ATCC 43587 / DSM 3638 / JCM 8422 / Vc1).